The primary structure comprises 295 residues: 5,10-methylenetetrahydrofolate reductase (295 aa).

Glu28 (proton donor/acceptor) is an active-site residue. Thr59 contributes to the NADH binding site. FAD is bound by residues His89, Arg119, Gly120, Asp121, Ala133, Tyr153, His157, Ala160, Asp166, Asn169, Arg172, and Lys173. Position 121 (Asp121) interacts with (6S)-5-methyl-5,6,7,8-tetrahydrofolate. Position 184 (Gln184) interacts with NADH. (6S)-5-methyl-5,6,7,8-tetrahydrofolate contacts are provided by Gln184, Gln220, and Lys280.

It belongs to the methylenetetrahydrofolate reductase family. Requires FAD as cofactor.

It catalyses the reaction (6S)-5-methyl-5,6,7,8-tetrahydrofolate + NAD(+) = (6R)-5,10-methylene-5,6,7,8-tetrahydrofolate + NADH + H(+). The protein operates within one-carbon metabolism; tetrahydrofolate interconversion. Its pathway is amino-acid biosynthesis; L-methionine biosynthesis via de novo pathway. Functionally, catalyzes the NADH-dependent reduction of 5,10-methylenetetrahydrofolate to 5-methyltetrahydrofolate. Is required to provide the methyl group necessary for methionine synthetase to convert homocysteine to methionine; the methyl group is given by 5-methyltetrahydrofolate. The polypeptide is 5,10-methylenetetrahydrofolate reductase (metF) (Buchnera aphidicola subsp. Baizongia pistaciae (strain Bp)).